The primary structure comprises 193 residues: Interferon lambda-3 (193 aa).

A signal peptide spans 1–19 (MLLLLLPLLLAAVLTRTQA). 3 disulfides stabilise this stretch: C35/C132, C69/C166, and C185/C192.

The protein belongs to the lambda interferon family.

It localises to the secreted. Its function is as follows. Cytokine with antiviral, antitumour and immunomodulatory activities. Plays a critical role in the antiviral host defense, predominantly in the epithelial tissues. Acts as a ligand for the heterodimeric class II cytokine receptor composed of IL10RB and IFNLR1, and receptor engagement leads to the activation of the JAK/STAT signaling pathway resulting in the expression of IFN-stimulated genes (ISG), which mediate the antiviral state. Has a restricted receptor distribution and therefore restricted targets: is primarily active in epithelial cells and this cell type-selective action is because of the epithelial cell-specific expression of its receptor IFNLR1. Seems not to be essential for early virus-activated host defense in vaginal infection, but plays an important role in Toll-like receptor (TLR)-induced antiviral defense. Plays a significant role in the antiviral immune defense in the intestinal epithelium. Exerts an immunomodulatory effect by up-regulating MHC class I antigen expression. This Mus musculus (Mouse) protein is Interferon lambda-3 (Ifnl3).